A 143-amino-acid polypeptide reads, in one-letter code: Sorting nexin-3 (143 aa).

The region spanning 23-140 (NILEIDVINP…SSFLQSPEFK (118 aa)) is the PX domain. A 1,2-diacyl-sn-glycero-3-phospho-(1D-myo-inositol-3-phosphate)-binding residues include Arg-66, Ser-68, Lys-92, Arg-97, and Arg-106.

The protein belongs to the sorting nexin family.

Its subcellular location is the cytoplasm. It localises to the golgi apparatus membrane. It is found in the prevacuolar compartment membrane. Its function is as follows. Required for retention of late Golgi membrane proteins. Component of the retrieval machinery that functions by direct interaction with the cytosolic tails of certain TGN membrane proteins during the sorting/budding process at the prevacuolar compartment. Binds phosphatidylinositol 3-phosphate (PtdIns(P3)). This Schizosaccharomyces pombe (strain 972 / ATCC 24843) (Fission yeast) protein is Sorting nexin-3 (snx3).